Consider the following 259-residue polypeptide: Nodulation protein J (259 aa).

Residues 30–256 (ASILGNLADP…LVSTALLRRR (227 aa)) form the ABC transmembrane type-2 domain. Helical transmembrane passes span 32 to 52 (ILGNLADPVIYLFGLGAGLGV), 64 to 84 (AFLAAGMIATSAMTAATFETI), 116 to 136 (AWAATKASLAGTGIGIVAAML), 141 to 161 (WLALLYALPVIAITGLAFASL), 174 to 194 (YFIFYQTLVITPMLFLSGAVF), and 228 to 248 (IANVCLHIGVLCIYIVVPFLV).

It belongs to the ABC-2 integral membrane protein family. Lipooligosaccharide exporter (TC 3.A.1.102) subfamily. As to quaternary structure, the complex is composed of two ATP-binding proteins (NodI) and two transmembrane proteins (NodJ).

The protein resides in the cell inner membrane. Part of the ABC transporter complex NodIJ involved in the export of the nodulation factors (Nod factors), the bacterial signal molecules that induce symbiosis and subsequent nodulation induction. Nod factors are LCO (lipo-chitin oligosaccharide), a modified beta-1,4-linked N-acetylglucosamine oligosaccharide. This subunit encodes the transporter. This chain is Nodulation protein J (nodJ), found in Rhizobium leguminosarum bv. viciae.